Consider the following 281-residue polypeptide: Elongation factor 1-delta (281 aa).

A2 carries the N-acetylalanine modification. The residue at position 17 (K17) is an N6-acetyllysine. Residues S37, S44, S60, S86, and S106 each carry the phosphoserine modification. Residues 80-115 (LIVRIASLEVENQNLRGVVQDLQQAISKLEVRLSTL) are leucine-zipper. K107 carries the post-translational modification N6-acetyllysine. Over residues 115 to 132 (LEKSSPTHRATAPQTQHV) the composition is skewed to polar residues. The segment at 115–172 (LEKSSPTHRATAPQTQHVSPMRQVEPPAKKGATPAEDDEDNDIDLFGSDEEEEDKEAA) is disordered. N6-acetyllysine; alternate is present on K117. K117 carries the N6-succinyllysine; alternate modification. S119 bears the Phosphoserine mark. T129 is modified (phosphothreonine). The residue at position 133 (S133) is a Phosphoserine. The residue at position 147 (T147) is a Phosphothreonine. Residues 149–169 (AEDDEDNDIDLFGSDEEEEDK) show a composition bias toward acidic residues. The residue at position 162 (S162) is a Phosphoserine; by CK2. The interval 173-281 (RLREERLRQY…SVDIAAFNKI (109 aa)) is catalytic (GEF).

This sequence belongs to the EF-1-beta/EF-1-delta family. As to quaternary structure, EF-1 is composed of 4 subunits: alpha, beta, delta isoform 1, and gamma. Isoform 2 interacts with HSF1 and NFE2L2.

Its subcellular location is the nucleus. Functionally, EF-1-beta and EF-1-delta stimulate the exchange of GDP bound to EF-1-alpha to GTP, regenerating EF-1-alpha for another round of transfer of aminoacyl-tRNAs to the ribosome. In terms of biological role, regulates induction of heat-shock-responsive genes through association with heat shock transcription factors and direct DNA-binding at heat shock promoter elements (HSE). The sequence is that of Elongation factor 1-delta (Eef1d) from Rattus norvegicus (Rat).